Here is a 78-residue protein sequence, read N- to C-terminus: DNA import protein CedA1 (78 aa).

The next 2 membrane-spanning stretches (helical) occupy residues Ser12 to Leu32 and Ala53 to Ile73.

Forms a complex composed of CedA, CedA1 and CedA2.

It localises to the cell membrane. Part of the Ced system, which is involved in DNA import. This is DNA import protein CedA1 from Sulfolobus acidocaldarius (strain ATCC 33909 / DSM 639 / JCM 8929 / NBRC 15157 / NCIMB 11770).